We begin with the raw amino-acid sequence, 103 residues long: MAKKSLIQRERKRQKLEQKYHLIRRSSKKKIRSKVYPLSLSEKTKMREKLQSLPRNSAPTRLHRRCFLTGRPRANYRDFGLSGHILREMVYACLLPGATRSSW.

This sequence belongs to the universal ribosomal protein uS14 family. In terms of assembly, part of the 30S ribosomal subunit.

The protein resides in the plastid. Its subcellular location is the chloroplast. In terms of biological role, binds 16S rRNA, required for the assembly of 30S particles. The polypeptide is Small ribosomal subunit protein uS14c (Oryza nivara (Indian wild rice)).